Consider the following 347-residue polypeptide: Phosphoribosylformylglycinamidine cyclo-ligase (347 aa).

Belongs to the AIR synthase family.

The protein resides in the cytoplasm. The catalysed reaction is 2-formamido-N(1)-(5-O-phospho-beta-D-ribosyl)acetamidine + ATP = 5-amino-1-(5-phospho-beta-D-ribosyl)imidazole + ADP + phosphate + H(+). Its pathway is purine metabolism; IMP biosynthesis via de novo pathway; 5-amino-1-(5-phospho-D-ribosyl)imidazole from N(2)-formyl-N(1)-(5-phospho-D-ribosyl)glycinamide: step 2/2. The polypeptide is Phosphoribosylformylglycinamidine cyclo-ligase (Yersinia pseudotuberculosis serotype O:1b (strain IP 31758)).